Reading from the N-terminus, the 443-residue chain is CBL-interacting protein kinase 2 (443 aa).

A Protein kinase domain is found at 13–267; that stretch reads YEMGKLLGQG…MDKIMENPWF (255 aa). Residues 19 to 27 and lysine 42 each bind ATP; that span reads LGQGTFAKV. Aspartate 135 functions as the Proton acceptor in the catalytic mechanism. An activation loop region spans residues 153-182; that stretch reads DFGLSALADCKRQDGLLHTTCGTPAYVAPE. Residues 302-329 form the NAF domain; it reads TLEKKPSNLNAFDIISLSTGLDLSGMFE. The tract at residues 333–362 is PPI; that stretch reads KKESKFTSTSTASTIISKIEDIAKGLRLKL.

This sequence belongs to the protein kinase superfamily. CAMK Ser/Thr protein kinase family. SNF1 subfamily. The cofactor is Mn(2+).

It catalyses the reaction L-seryl-[protein] + ATP = O-phospho-L-seryl-[protein] + ADP + H(+). The enzyme catalyses L-threonyl-[protein] + ATP = O-phospho-L-threonyl-[protein] + ADP + H(+). Functionally, CIPK serine-threonine protein kinases interact with CBL proteins. Binding of a CBL protein to the regulatory NAF domain of CIPK protein lead to the activation of the kinase in a calcium-dependent manner. The chain is CBL-interacting protein kinase 2 (CIPK2) from Oryza sativa subsp. japonica (Rice).